The following is a 270-amino-acid chain: Mevalonyl-coenzyme A hydratase sidH (270 aa).

A PTS1-type peroxisomal targeting signal motif is present at residues 268–270 (SKL).

Belongs to the enoyl-CoA hydratase/isomerase family.

The protein resides in the peroxisome. It participates in siderophore biosynthesis. Its function is as follows. Mevalonyl-coenzyme A hydratase; part of the siderophore biosynthetic pathway. Aspergillus fumigatus produces 4 types of siderophores, low-molecular-mass iron chelators, including excreted fusarinine C (FsC) and triacetylfusarinine C (TAFC) for iron uptake and intacellular ferricrocin (FC) for hyphal and hydroxyferricrocin (HFC) for conidial iron distribution and storage. TAFC consists of 3 N(2)-acetyl-N(5)-anhydromevalonyl-N(5)-hydroxyornithine residues cyclically linked by ester bonds; FC is a cyclic hexapeptide with the structure Gly-Ser-Gly-(N(5)-acetyl-N(5)-hydroxyornithine)x3. The biosynthesis of all four siderophores depends on the hydroxylation of ornithine, catalyzed by the monooxygenase sidA. Subsequently, the pathways for biosynthesis of extra- and intracellular siderophores split. For biosynthesis of extracellular siderophores, the transacylase sidF transfers anhydromevalonyl to N(5)-hydroxyornithine. The required anhydromevalonyl-CoA moiety is derived from mevalonate by CoA ligation and dehydration catalyzed by sidI and sidH respectively. The acetylation of N(5)-hydroxyornithine for FC biosynthesis involves the constitutively expressed sidL. FC is hydroxylated to HFC by an as yet uncharacterized enzyme during conidiation. Assembly of fusarinine C (FsC) and FC is catalyzed by two different nonribosomal peptide synthetases (NRPS), sidD and sidC respectively. Subsequently, sidG catalyzes N2-acetylation of FsC for forming TAFC. Both extra- and intracellular siderophores are crucial for growth during iron limitation and virulence. The polypeptide is Mevalonyl-coenzyme A hydratase sidH (Aspergillus fumigatus (strain ATCC MYA-4609 / CBS 101355 / FGSC A1100 / Af293) (Neosartorya fumigata)).